Reading from the N-terminus, the 272-residue chain is Ribosomal RNA small subunit methyltransferase A (272 aa).

S-adenosyl-L-methionine is bound by residues His-10, Leu-12, Gly-37, Glu-57, Asp-82, and Asn-98.

It belongs to the class I-like SAM-binding methyltransferase superfamily. rRNA adenine N(6)-methyltransferase family. RsmA subfamily.

The protein localises to the cytoplasm. The catalysed reaction is adenosine(1518)/adenosine(1519) in 16S rRNA + 4 S-adenosyl-L-methionine = N(6)-dimethyladenosine(1518)/N(6)-dimethyladenosine(1519) in 16S rRNA + 4 S-adenosyl-L-homocysteine + 4 H(+). In terms of biological role, specifically dimethylates two adjacent adenosines (A1518 and A1519) in the loop of a conserved hairpin near the 3'-end of 16S rRNA in the 30S particle. May play a critical role in biogenesis of 30S subunits. This Gloeobacter violaceus (strain ATCC 29082 / PCC 7421) protein is Ribosomal RNA small subunit methyltransferase A.